The primary structure comprises 69 residues: Sec-independent protein translocase protein TatA (69 aa).

Residues M1–G21 form a helical membrane-spanning segment.

It belongs to the TatA/E family. As to quaternary structure, forms a complex with TatC.

Its subcellular location is the cell inner membrane. Its function is as follows. Part of the twin-arginine translocation (Tat) system that transports large folded proteins containing a characteristic twin-arginine motif in their signal peptide across membranes. TatA could form the protein-conducting channel of the Tat system. The protein is Sec-independent protein translocase protein TatA of Pelodictyon phaeoclathratiforme (strain DSM 5477 / BU-1).